The sequence spans 146 residues: Prefoldin subunit alpha (146 aa).

The protein belongs to the prefoldin alpha subunit family. As to quaternary structure, heterohexamer of two alpha and four beta subunits.

It is found in the cytoplasm. Its function is as follows. Molecular chaperone capable of stabilizing a range of proteins. Seems to fulfill an ATP-independent, HSP70-like function in archaeal de novo protein folding. The chain is Prefoldin subunit alpha from Methanobrevibacter smithii (strain ATCC 35061 / DSM 861 / OCM 144 / PS).